The chain runs to 158 residues: Cytochrome b6-f complex subunit 4 (158 aa).

Transmembrane regions (helical) follow at residues 34-54 (LLYI…GLAV), 93-113 (LLGV…PFLE), and 129-149 (TVFL…TLPI).

The protein belongs to the cytochrome b family. PetD subfamily. In terms of assembly, the 4 large subunits of the cytochrome b6-f complex are cytochrome b6, subunit IV (17 kDa polypeptide, petD), cytochrome f and the Rieske protein, while the 4 small subunits are petG, petL, petM and petN. The complex functions as a dimer.

It localises to the plastid. The protein localises to the chloroplast thylakoid membrane. Component of the cytochrome b6-f complex, which mediates electron transfer between photosystem II (PSII) and photosystem I (PSI), cyclic electron flow around PSI, and state transitions. The polypeptide is Cytochrome b6-f complex subunit 4 (Liriodendron tulipifera (Tuliptree)).